A 245-amino-acid polypeptide reads, in one-letter code: Small ribosomal subunit protein uS2 (245 aa).

Belongs to the universal ribosomal protein uS2 family.

This chain is Small ribosomal subunit protein uS2, found in Pseudomonas fluorescens (strain SBW25).